We begin with the raw amino-acid sequence, 450 residues long: Phosphoglucosamine mutase (450 aa).

Serine 101 functions as the Phosphoserine intermediate in the catalytic mechanism. Positions 101, 240, 242, and 244 each coordinate Mg(2+). Serine 101 carries the post-translational modification Phosphoserine.

The protein belongs to the phosphohexose mutase family. Requires Mg(2+) as cofactor. Post-translationally, activated by phosphorylation.

It catalyses the reaction alpha-D-glucosamine 1-phosphate = D-glucosamine 6-phosphate. Its function is as follows. Catalyzes the conversion of glucosamine-6-phosphate to glucosamine-1-phosphate. The polypeptide is Phosphoglucosamine mutase (Streptococcus pneumoniae serotype 4 (strain ATCC BAA-334 / TIGR4)).